We begin with the raw amino-acid sequence, 216 residues long: Refilin-A (216 aa).

Residues 1 to 83 are disordered; the sequence is MVGHLHLQGM…LPNPPASEMR (83 aa). Positions 12–22 are enriched in basic and acidic residues; the sequence is DSLKEQGREGL. A compositionally biased stretch (pro residues) spans 29–39; that stretch reads GLPPSPSPSPP. A compositionally biased stretch (low complexity) spans 57–71; that stretch reads ASSEPPGPSEARAPP. Asymmetric dimethylarginine is present on Arg-163.

It belongs to the Refilin family. As to quaternary structure, interacts with FLNA and FLNB.

Its subcellular location is the cytoplasm. The protein resides in the cytoskeleton. Functionally, involved in the regulation of the perinuclear actin network and nuclear shape through interaction with filamins. Plays an essential role in actin cytoskeleton formation in developing cartilaginous cells. The protein is Refilin-A of Homo sapiens (Human).